A 155-amino-acid polypeptide reads, in one-letter code: Large ribosomal subunit protein eL24 (155 aa).

Basic and acidic residues predominate over residues 98 to 129 (PEVRKAKRDDKAKADKEKKKADKAARKAEKAK). The segment at 98–155 (PEVRKAKRDDKAKADKEKKKADKAARKAEKAKLAAAQGSKVSKQQAKGAFQKVAATSR) is disordered.

It belongs to the eukaryotic ribosomal protein eL24 family.

The chain is Large ribosomal subunit protein eL24 (RPL24) from Candida glabrata (strain ATCC 2001 / BCRC 20586 / JCM 3761 / NBRC 0622 / NRRL Y-65 / CBS 138) (Yeast).